The chain runs to 318 residues: 5'-3' exonuclease (318 aa).

One can recognise a 5'-3' exonuclease domain in the interval 194–278; it reads AYAELALLRG…ATDAPVTLST (85 aa).

Its function is as follows. 5'-3' exonuclease acting preferentially on double-stranded DNA. This is 5'-3' exonuclease from Mycobacterium tuberculosis (strain ATCC 25618 / H37Rv).